Reading from the N-terminus, the 272-residue chain is Proteasome subunit beta type-5 (272 aa).

The propeptide at 1-62 is removed in mature form; the sequence is MINIDFDNIE…APKALEFAHG (62 aa). The active-site Nucleophile is Thr63.

The protein belongs to the peptidase T1B family. The 26S proteasome consists of a 20S proteasome core and two 19S regulatory subunits. The 20S proteasome core is composed of 28 subunits that are arranged in four stacked rings, resulting in a barrel-shaped structure. The two end rings are each formed by seven alpha subunits, and the two central rings are each formed by seven beta subunits. The catalytic chamber with the active sites is on the inside of the barrel.

The protein resides in the cytoplasm. The protein localises to the nucleus. It carries out the reaction Cleavage of peptide bonds with very broad specificity.. Its function is as follows. The proteasome is a multicatalytic proteinase complex which is characterized by its ability to cleave peptides with Arg, Phe, Tyr, Leu, and Glu adjacent to the leaving group at neutral or slightly basic pH. The proteasome has an ATP-dependent proteolytic activity. This chain is Proteasome subunit beta type-5 (psmB5), found in Dictyostelium discoideum (Social amoeba).